Reading from the N-terminus, the 445-residue chain is N-succinylarginine dihydrolase (445 aa).

Residues 19–28 (AGLSFGNVAS), N110, and 137–138 (HR) contribute to the substrate site. E174 is a catalytic residue. R214 lines the substrate pocket. H250 is an active-site residue. 2 residues coordinate substrate: D252 and N363. The active-site Nucleophile is C369.

The protein belongs to the succinylarginine dihydrolase family. As to quaternary structure, homodimer.

It carries out the reaction N(2)-succinyl-L-arginine + 2 H2O + 2 H(+) = N(2)-succinyl-L-ornithine + 2 NH4(+) + CO2. The protein operates within amino-acid degradation; L-arginine degradation via AST pathway; L-glutamate and succinate from L-arginine: step 2/5. Its function is as follows. Catalyzes the hydrolysis of N(2)-succinylarginine into N(2)-succinylornithine, ammonia and CO(2). The chain is N-succinylarginine dihydrolase from Shewanella halifaxensis (strain HAW-EB4).